The primary structure comprises 260 residues: D-threitol dehydrogenase (260 aa).

An NAD(+)-binding site is contributed by 21 to 50; that stretch reads LVTGAASGIGAAIASAYATKGARIAAVDLN. Tyrosine 166 acts as the Proton acceptor in catalysis. Residue lysine 170 participates in NAD(+) binding.

Belongs to the short-chain dehydrogenases/reductases (SDR) family.

The catalysed reaction is D-threitol + NAD(+) = D-erythrulose + NADH + H(+). The protein operates within carbohydrate metabolism; D-threitol degradation. Catalyzes the NAD-dependent reversible oxidation of D-threitol. Involved in the degradation pathway of D-threitol, that allows M.smegmatis to grow on this compound as the sole carbon source. Does not catalyze the oxidation of xylitol, L-sorbitol, and L-sorbose. The sequence is that of D-threitol dehydrogenase from Mycolicibacterium smegmatis (strain ATCC 700084 / mc(2)155) (Mycobacterium smegmatis).